Reading from the N-terminus, the 451-residue chain is Glucose-6-phosphate isomerase (451 aa).

Glu-291 (proton donor) is an active-site residue. Residues His-312 and Lys-426 contribute to the active site.

It belongs to the GPI family.

The protein localises to the cytoplasm. The catalysed reaction is alpha-D-glucose 6-phosphate = beta-D-fructose 6-phosphate. Its pathway is carbohydrate biosynthesis; gluconeogenesis. It functions in the pathway carbohydrate degradation; glycolysis; D-glyceraldehyde 3-phosphate and glycerone phosphate from D-glucose: step 2/4. Functionally, catalyzes the reversible isomerization of glucose-6-phosphate to fructose-6-phosphate. The sequence is that of Glucose-6-phosphate isomerase from Caldanaerobacter subterraneus subsp. tengcongensis (strain DSM 15242 / JCM 11007 / NBRC 100824 / MB4) (Thermoanaerobacter tengcongensis).